The following is a 194-amino-acid chain: Adenylate kinase (194 aa).

8–16 (GIPGVGKST) serves as a coordination point for ATP.

The protein belongs to the archaeal adenylate kinase family. In terms of assembly, homotrimer.

The protein localises to the cytoplasm. The catalysed reaction is AMP + ATP = 2 ADP. The sequence is that of Adenylate kinase (adkA) from Sulfolobus acidocaldarius (strain ATCC 33909 / DSM 639 / JCM 8929 / NBRC 15157 / NCIMB 11770).